The following is a 155-amino-acid chain: Large ribosomal subunit protein uL15 (155 aa).

The segment covering 1-13 has biased composition (basic and acidic residues); that stretch reads MKLNELRDCEGAT. Residues 1 to 47 are disordered; it reads MKLNELRDCEGATKNRKRIGRGIGSGTGKTGGRGVKGQKSRSGVSLN. Over residues 21-35 the composition is skewed to gly residues; the sequence is RGIGSGTGKTGGRGV.

This sequence belongs to the universal ribosomal protein uL15 family. In terms of assembly, part of the 50S ribosomal subunit.

In terms of biological role, binds to the 23S rRNA. This is Large ribosomal subunit protein uL15 from Bartonella tribocorum (strain CIP 105476 / IBS 506).